We begin with the raw amino-acid sequence, 199 residues long: GTP cyclohydrolase-2 (199 aa).

50–54 (RIHSE) provides a ligand contact to GTP. The Zn(2+) site is built by Cys55, Cys66, and Cys68. GTP-binding positions include Gln71, 93-95 (EGR), and Thr115. The active-site Proton acceptor is Asp127. Residue Arg129 is the Nucleophile of the active site. GTP is bound by residues Thr150 and Lys155.

This sequence belongs to the GTP cyclohydrolase II family. As to quaternary structure, homodimer. The cofactor is Zn(2+).

The enzyme catalyses GTP + 4 H2O = 2,5-diamino-6-hydroxy-4-(5-phosphoribosylamino)-pyrimidine + formate + 2 phosphate + 3 H(+). Its pathway is cofactor biosynthesis; riboflavin biosynthesis; 5-amino-6-(D-ribitylamino)uracil from GTP: step 1/4. In terms of biological role, catalyzes the conversion of GTP to 2,5-diamino-6-ribosylamino-4(3H)-pyrimidinone 5'-phosphate (DARP), formate and pyrophosphate. This Buchnera aphidicola subsp. Baizongia pistaciae (strain Bp) protein is GTP cyclohydrolase-2.